Here is a 335-residue protein sequence, read N- to C-terminus: Probable cytosolic iron-sulfur protein assembly protein Ciao1 (335 aa).

WD repeat units follow at residues 12–51 (GHKG…WTTK), 57–96 (GHKR…FECN), 101–140 (GHEN…EFEC), 146–185 (PHTQ…SDWD), 192–231 (SHTS…NDAG), 250–289 (QHSR…KRDE), and 301–335 (AHDQ…KMTE).

It belongs to the WD repeat CIA1 family.

In terms of biological role, essential component of the cytosolic iron-sulfur (Fe/S) protein assembly machinery. Required for the maturation of extramitochondrial Fe/S proteins. This chain is Probable cytosolic iron-sulfur protein assembly protein Ciao1, found in Drosophila ananassae (Fruit fly).